We begin with the raw amino-acid sequence, 205 residues long: Ribosomal RNA small subunit methyltransferase G (205 aa).

S-adenosyl-L-methionine-binding positions include Gly76, Leu81, Ile127–Glu128, and Arg140.

Belongs to the methyltransferase superfamily. RNA methyltransferase RsmG family.

It is found in the cytoplasm. It catalyses the reaction guanosine(527) in 16S rRNA + S-adenosyl-L-methionine = N(7)-methylguanosine(527) in 16S rRNA + S-adenosyl-L-homocysteine. Its function is as follows. Specifically methylates the N7 position of guanine in position 527 of 16S rRNA. In Francisella tularensis subsp. tularensis (strain WY96-3418), this protein is Ribosomal RNA small subunit methyltransferase G.